We begin with the raw amino-acid sequence, 196 residues long: Lipoprotein signal peptidase (196 aa).

3 helical membrane passes run Ser-17–Leu-37, Ser-73–Ile-93, and Asn-96–Ile-116. Active-site residues include Asp-126 and Asp-144. The chain crosses the membrane as a helical span at residues Tyr-135–Ile-155.

This sequence belongs to the peptidase A8 family.

Its subcellular location is the cell inner membrane. It carries out the reaction Release of signal peptides from bacterial membrane prolipoproteins. Hydrolyzes -Xaa-Yaa-Zaa-|-(S,diacylglyceryl)Cys-, in which Xaa is hydrophobic (preferably Leu), and Yaa (Ala or Ser) and Zaa (Gly or Ala) have small, neutral side chains.. It participates in protein modification; lipoprotein biosynthesis (signal peptide cleavage). In terms of biological role, this protein specifically catalyzes the removal of signal peptides from prolipoproteins. In Rickettsia akari (strain Hartford), this protein is Lipoprotein signal peptidase.